The sequence spans 429 residues: Tubby-like F-box protein 5 (429 aa).

The F-box domain occupies 53–108; that stretch reads TRWANLPAALLRDVMKKLDESESTWPARKQVVACAGVCKTWRLMCKDIVKSPEFSG. The interval 360–385 is disordered; that stretch reads QPGSGSDGGALATRPSLSPQQPEQSN. The span at 374-383 shows a compositional bias: polar residues; that stretch reads PSLSPQQPEQ.

This sequence belongs to the TUB family. Mostly expressed in roots, flowers and siliques.

This Arabidopsis thaliana (Mouse-ear cress) protein is Tubby-like F-box protein 5.